Reading from the N-terminus, the 136-residue chain is uncharacterized protein (136 aa).

The protein belongs to the MG439/MG440 family.

This is an uncharacterized protein from Mycoplasma pneumoniae (strain ATCC 29342 / M129 / Subtype 1) (Mycoplasmoides pneumoniae).